We begin with the raw amino-acid sequence, 316 residues long: Very-long-chain 3-oxooacyl-coA reductase let-767 (316 aa).

NADP(+) contacts are provided by residues 52-80 (ITGATDGIGKAYAFELARRGFNVFIVSRT) and Asp-106. Position 189 (Ser-189) interacts with substrate. The active-site Proton acceptor is the Tyr-202. Lys-206 contributes to the NADP(+) binding site.

It belongs to the short-chain dehydrogenases/reductases (SDR) family. 17-beta-HSD 3 subfamily.

It carries out the reaction a very-long-chain (3R)-3-hydroxyacyl-CoA + NADP(+) = a very-long-chain 3-oxoacyl-CoA + NADPH + H(+). The protein operates within lipid metabolism; fatty acid biosynthesis. Functionally, required for branched chain fatty acid synthesis. Catalyzes the reduction of the 3-ketoacyl-CoA intermediate that is formed in each cycle of fatty acid elongation. Very long-chain fatty acids (VLCFAs) serve as precursors for ceramide and sphingolipids. May also be required for sterol hormone production. The chain is Very-long-chain 3-oxooacyl-coA reductase let-767 from Caenorhabditis briggsae.